A 330-amino-acid polypeptide reads, in one-letter code: MTHTLRVIFAGTPEFAAAALAAIHKAGFPVPLVLTQPDRPAGRGMKLQASAVKRYAVEHGMAVAQPPSLRRAGKYPAEAADAIELLRTTPHDVMVVAAYGLLLPQEVLDIPRAGCINIHASLLPRWRGAAPIHRAIEAGDAETGVTLMQMDVGLDTGAMIEEARIAIAPDDTTATLHDRLAADGARLIVDALVRLERDGTLPATPQPADGVTYAEKIGKHEAALDWRKPADVLARQVRAFDPFPGGVATLDGAAIKLWAAEPVATDGTIASAAPGTIVEAAPEGVVVACGSGALRVTQLQKPGGKRLPAREFLAGSPLAAGQRFALPDVD.

121–124 is a binding site for (6S)-5,6,7,8-tetrahydrofolate; it reads SLLP.

This sequence belongs to the Fmt family.

It catalyses the reaction L-methionyl-tRNA(fMet) + (6R)-10-formyltetrahydrofolate = N-formyl-L-methionyl-tRNA(fMet) + (6S)-5,6,7,8-tetrahydrofolate + H(+). Functionally, attaches a formyl group to the free amino group of methionyl-tRNA(fMet). The formyl group appears to play a dual role in the initiator identity of N-formylmethionyl-tRNA by promoting its recognition by IF2 and preventing the misappropriation of this tRNA by the elongation apparatus. This is Methionyl-tRNA formyltransferase from Burkholderia cenocepacia (strain HI2424).